Consider the following 430-residue polypeptide: Asparagine--tRNA ligase (430 aa).

This sequence belongs to the class-II aminoacyl-tRNA synthetase family. In terms of assembly, homodimer.

The protein localises to the cytoplasm. It catalyses the reaction tRNA(Asn) + L-asparagine + ATP = L-asparaginyl-tRNA(Asn) + AMP + diphosphate + H(+). The sequence is that of Asparagine--tRNA ligase from Staphylococcus saprophyticus subsp. saprophyticus (strain ATCC 15305 / DSM 20229 / NCIMB 8711 / NCTC 7292 / S-41).